The chain runs to 581 residues: Arginine--tRNA ligase (581 aa).

Positions 131-141 match the 'HIGH' region motif; sequence ANPTGPLHVGH.

The protein belongs to the class-I aminoacyl-tRNA synthetase family. Monomer.

It is found in the cytoplasm. It carries out the reaction tRNA(Arg) + L-arginine + ATP = L-arginyl-tRNA(Arg) + AMP + diphosphate. In Ruegeria pomeroyi (strain ATCC 700808 / DSM 15171 / DSS-3) (Silicibacter pomeroyi), this protein is Arginine--tRNA ligase.